The sequence spans 156 residues: uncharacterized protein (156 aa).

An N-acetyltransferase domain is found at 1–145; that stretch reads MIIRKFSSKD…DAILMIKKKP (145 aa).

This sequence belongs to the acetyltransferase family.

It localises to the cytoplasm. This is an uncharacterized protein from Methanocaldococcus jannaschii (strain ATCC 43067 / DSM 2661 / JAL-1 / JCM 10045 / NBRC 100440) (Methanococcus jannaschii).